Reading from the N-terminus, the 1208-residue chain is E3 ubiquitin-protein ligase DZIP3 (1208 aa).

Positions 10 to 29 (VRHPAVEDQRKEETENKLEK) are enriched in basic and acidic residues. Disordered regions lie at residues 10–38 (VRHP…NKQE) and 637–698 (GTSI…PHSV). Coiled-coil stretches lie at residues 14 to 43 (AVED…DIPT), 647 to 676 (ESLK…SKED), 792 to 853 (IASL…SKLN), and 904 to 939 (QLKA…KVKQ). Over residues 637–647 (GTSIPSESSTE) the composition is skewed to polar residues. Over residues 648-657 (SLKDLQEVKS) the composition is skewed to basic and acidic residues. The segment covering 658-669 (KQRKKKKTKNKK) has biased composition (basic residues). The segment covering 670 to 693 (NKDSKEDQVPYVVEKEEQLRKEQA) has biased composition (basic and acidic residues). The interval 1088-1145 (KSQSQGKSVSNVNCVSPSHSPSQPDAAQPPKPAWRPLTSQGPATWEGASNPDEEEEEE) is disordered. Positions 1089 to 1112 (SQSQGKSVSNVNCVSPSHSPSQPD) are enriched in polar residues. The RING-type; atypical zinc-finger motif lies at 1148-1188 (CVICHENLSPENLSVLPCAHKFHAQCIRPWLMQQGTCPTCR).

Interacts with DAZ proteins. Widely expressed at low level. Highly expressed in skeletal muscle, kidney and heart. Expressed at low level in placenta, lung, brain, liver and pancreas.

Its subcellular location is the cytoplasm. The enzyme catalyses S-ubiquitinyl-[E2 ubiquitin-conjugating enzyme]-L-cysteine + [acceptor protein]-L-lysine = [E2 ubiquitin-conjugating enzyme]-L-cysteine + N(6)-ubiquitinyl-[acceptor protein]-L-lysine.. Its pathway is protein modification; protein ubiquitination. Its function is as follows. E3 Ubiquitin ligase proteins mediate ubiquitination and subsequent proteasomal degradation of target proteins. E3 ubiquitin ligases accept ubiquitin from an E2 ubiquitin-conjugating enzyme in the form of a thioester and then directly transfers the ubiquitin to targeted substrates. Able to specifically bind RNA. In Homo sapiens (Human), this protein is E3 ubiquitin-protein ligase DZIP3 (DZIP3).